Here is a 24-residue protein sequence, read N- to C-terminus: Calcium-binding shell glycoprotein P50 (24 aa).

Positions 1–24 are disordered; that stretch reads KDALEHTGFAPKKDGEEHVEWNYN.

In terms of processing, glycosylated. In terms of tissue distribution, nacreous and prismatic layers of the shell.

Its function is as follows. Calcium-binding. The chain is Calcium-binding shell glycoprotein P50 from Unio pictorum (Painter's mussel).